A 417-amino-acid polypeptide reads, in one-letter code: Glutamyl-tRNA reductase (417 aa).

Residues 49–52, serine 105, 110–112, and glutamine 116 contribute to the substrate site; these read TCNR and EPQ. Cysteine 50 (nucleophile) is an active-site residue. NADP(+) is bound at residue 185–190; sequence GAGEMI.

The protein belongs to the glutamyl-tRNA reductase family. Homodimer.

The enzyme catalyses (S)-4-amino-5-oxopentanoate + tRNA(Glu) + NADP(+) = L-glutamyl-tRNA(Glu) + NADPH + H(+). It functions in the pathway porphyrin-containing compound metabolism; protoporphyrin-IX biosynthesis; 5-aminolevulinate from L-glutamyl-tRNA(Glu): step 1/2. Its function is as follows. Catalyzes the NADPH-dependent reduction of glutamyl-tRNA(Glu) to glutamate 1-semialdehyde (GSA). The chain is Glutamyl-tRNA reductase from Azoarcus sp. (strain BH72).